Consider the following 312-residue polypeptide: Beta-ketoacyl-[acyl-carrier-protein] synthase III (312 aa).

Active-site residues include cysteine 112 and histidine 237. The tract at residues 238-242 (QANIR) is ACP-binding. Asparagine 267 is an active-site residue.

Belongs to the thiolase-like superfamily. FabH family. Homodimer.

It is found in the cytoplasm. The catalysed reaction is (2S)-2-methylbutanoyl-CoA + malonyl-[ACP] + H(+) = (4S)-4-methyl-3-oxohexanoyl-[ACP] + CO2 + CoA. It catalyses the reaction 2-methylpropanoyl-CoA + malonyl-[ACP] + H(+) = 4-methyl-3-oxopentanoyl-[ACP] + CO2 + CoA. It carries out the reaction 3-methylbutanoyl-CoA + malonyl-[ACP] + H(+) = 5-methyl-3-oxohexanoyl-[ACP] + CO2 + CoA. The enzyme catalyses malonyl-[ACP] + acetyl-CoA + H(+) = 3-oxobutanoyl-[ACP] + CO2 + CoA. It functions in the pathway lipid metabolism; fatty acid biosynthesis. Catalyzes the condensation reaction of fatty acid synthesis by the addition to an acyl acceptor of two carbons from malonyl-ACP. Catalyzes the first condensation reaction which initiates fatty acid synthesis and may therefore play a role in governing the total rate of fatty acid production. Possesses both acetoacetyl-ACP synthase and acetyl transacylase activities. Can use branched-chain acyl-CoAs, with a preference for 2-methylbutanoyl-CoA, the precursor of odd-numbered anteiso fatty acids, at 30 degrees Celsius, which is further increased at a low temperature. Shows weak activity with acetyl-CoA. The protein is Beta-ketoacyl-[acyl-carrier-protein] synthase III of Listeria monocytogenes serotype 1/2a (strain 10403S).